The chain runs to 597 residues: Probable translation initiation factor IF-2 (597 aa).

The tr-type G domain maps to 13-229 (LRTPIVCVMG…LLGLAQKFLE (217 aa)). The segment at 22–29 (GHVDHGKT) is G1. Residue 22-29 (GHVDHGKT) coordinates GTP. A G2 region spans residues 47-51 (AITQH). Residues 84-87 (DTPG) form a G3 region. GTP contacts are provided by residues 84–88 (DTPGH) and 138–141 (NKID). The tract at residues 138–141 (NKID) is G4. The tract at residues 206–208 (SAV) is G5.

Belongs to the TRAFAC class translation factor GTPase superfamily. Classic translation factor GTPase family. IF-2 subfamily.

Functionally, function in general translation initiation by promoting the binding of the formylmethionine-tRNA to ribosomes. Seems to function along with eIF-2. The protein is Probable translation initiation factor IF-2 of Methanosarcina acetivorans (strain ATCC 35395 / DSM 2834 / JCM 12185 / C2A).